The chain runs to 309 residues: Sulfate adenylyltransferase subunit 2 (309 aa).

It belongs to the PAPS reductase family. CysD subfamily. As to quaternary structure, heterodimer composed of CysD, the smaller subunit, and CysN.

It catalyses the reaction sulfate + ATP + H(+) = adenosine 5'-phosphosulfate + diphosphate. The protein operates within sulfur metabolism; hydrogen sulfide biosynthesis; sulfite from sulfate: step 1/3. Its function is as follows. With CysN forms the ATP sulfurylase (ATPS) that catalyzes the adenylation of sulfate producing adenosine 5'-phosphosulfate (APS) and diphosphate, the first enzymatic step in sulfur assimilation pathway. APS synthesis involves the formation of a high-energy phosphoric-sulfuric acid anhydride bond driven by GTP hydrolysis by CysN coupled to ATP hydrolysis by CysD. The chain is Sulfate adenylyltransferase subunit 2 from Mycobacterium sp. (strain JLS).